A 440-amino-acid chain; its full sequence is MSEFSQTVPELVAWARKNDFSISLPVDRLSFLLAVATLNGERLDGEMSEGELVDAFRHVSDAFEQTSETIGVRANNAINDMVRQRLLNRFTSEQAEGNAIYRLTPLGIGITDYYIRQREFSTLRLSMQLSIVAGELKRAADAAAEGGDEFHWHRNVYAPLKYSVAEIFDSIDLTQRIMDEQQQQVKDDIAQLLNKDWRAAISSCELLLSETSGTLRELQDTLEAAGDKLQANLLRIQDATMTHDDLHFVDRLVFDLQSKLDRIISWGQQSIDLWIGYDRHVHKFIRTAIDMDKNRIFAQRLRQSVQTYFDDPWALTYANADRLLDMRDEEMALRDDEVTGELPPDLEYEEFNEIREQLAAIIEEQLAIYKTRQTPLDLGLVVREYLAQYPRARHFDVARIVIDQAVRLGVAQADFTGLPAKWQPINDYGAKVQAHVIDKY.

A leucine-zipper region spans residues 208–236 (LSETSGTLRELQDTLEAAGDKLQANLLRI).

It belongs to the MukF family. As to quaternary structure, interacts, and probably forms a ternary complex, with MukE and MukB via its C-terminal region. The complex formation is stimulated by calcium or magnesium. It is required for an interaction between MukE and MukB.

The protein localises to the cytoplasm. Its subcellular location is the nucleoid. Its function is as follows. Involved in chromosome condensation, segregation and cell cycle progression. May participate in facilitating chromosome segregation by condensation DNA from both sides of a centrally located replisome during cell division. Not required for mini-F plasmid partitioning. Probably acts via its interaction with MukB and MukE. Overexpression results in anucleate cells. It has a calcium binding activity. The protein is Chromosome partition protein MukF of Salmonella typhi.